Reading from the N-terminus, the 471-residue chain is 3-isopropylmalate dehydratase large subunit (471 aa).

3 residues coordinate [4Fe-4S] cluster: cysteine 347, cysteine 407, and cysteine 410.

The protein belongs to the aconitase/IPM isomerase family. LeuC type 1 subfamily. As to quaternary structure, heterodimer of LeuC and LeuD. The cofactor is [4Fe-4S] cluster.

The enzyme catalyses (2R,3S)-3-isopropylmalate = (2S)-2-isopropylmalate. The protein operates within amino-acid biosynthesis; L-leucine biosynthesis; L-leucine from 3-methyl-2-oxobutanoate: step 2/4. Catalyzes the isomerization between 2-isopropylmalate and 3-isopropylmalate, via the formation of 2-isopropylmaleate. The polypeptide is 3-isopropylmalate dehydratase large subunit (Geobacillus sp. (strain WCH70)).